Reading from the N-terminus, the 143-residue chain is Ribosome maturation factor RimP (143 aa).

The protein belongs to the RimP family.

The protein resides in the cytoplasm. Functionally, required for maturation of 30S ribosomal subunits. This Nitrosomonas eutropha (strain DSM 101675 / C91 / Nm57) protein is Ribosome maturation factor RimP.